We begin with the raw amino-acid sequence, 207 residues long: Probable flagellin 2 (207 aa).

Positions 1-14 are excised as a propeptide; it reads MRVGSRKLRRDEKG.

This sequence belongs to the archaeal flagellin family.

The protein localises to the archaeal flagellum. Functionally, flagellin is the subunit protein which polymerizes to form the filaments of archaeal flagella. This is Probable flagellin 2 (flaB2) from Archaeoglobus fulgidus (strain ATCC 49558 / DSM 4304 / JCM 9628 / NBRC 100126 / VC-16).